The sequence spans 236 residues: Ubiquinone biosynthesis O-methyltransferase (236 aa).

4 residues coordinate S-adenosyl-L-methionine: arginine 39, glycine 59, aspartate 80, and methionine 124.

The protein belongs to the methyltransferase superfamily. UbiG/COQ3 family.

It carries out the reaction a 3-demethylubiquinol + S-adenosyl-L-methionine = a ubiquinol + S-adenosyl-L-homocysteine + H(+). The catalysed reaction is a 3-(all-trans-polyprenyl)benzene-1,2-diol + S-adenosyl-L-methionine = a 2-methoxy-6-(all-trans-polyprenyl)phenol + S-adenosyl-L-homocysteine + H(+). It functions in the pathway cofactor biosynthesis; ubiquinone biosynthesis. Its function is as follows. O-methyltransferase that catalyzes the 2 O-methylation steps in the ubiquinone biosynthetic pathway. The chain is Ubiquinone biosynthesis O-methyltransferase from Shewanella halifaxensis (strain HAW-EB4).